Reading from the N-terminus, the 378-residue chain is Queuine tRNA-ribosyltransferase (378 aa).

D91 acts as the Proton acceptor in catalysis. Residues D91–F95, D145, Q189, and G216 each bind substrate. Residues G247–D253 are RNA binding. D266 acts as the Nucleophile in catalysis. Positions T271 to R275 are RNA binding; important for wobble base 34 recognition. C304, C306, C309, and H335 together coordinate Zn(2+).

Belongs to the queuine tRNA-ribosyltransferase family. In terms of assembly, homodimer. Within each dimer, one monomer is responsible for RNA recognition and catalysis, while the other monomer binds to the replacement base PreQ1. Zn(2+) is required as a cofactor.

The enzyme catalyses 7-aminomethyl-7-carbaguanine + guanosine(34) in tRNA = 7-aminomethyl-7-carbaguanosine(34) in tRNA + guanine. Its pathway is tRNA modification; tRNA-queuosine biosynthesis. Functionally, catalyzes the base-exchange of a guanine (G) residue with the queuine precursor 7-aminomethyl-7-deazaguanine (PreQ1) at position 34 (anticodon wobble position) in tRNAs with GU(N) anticodons (tRNA-Asp, -Asn, -His and -Tyr). Catalysis occurs through a double-displacement mechanism. The nucleophile active site attacks the C1' of nucleotide 34 to detach the guanine base from the RNA, forming a covalent enzyme-RNA intermediate. The proton acceptor active site deprotonates the incoming PreQ1, allowing a nucleophilic attack on the C1' of the ribose to form the product. After dissociation, two additional enzymatic reactions on the tRNA convert PreQ1 to queuine (Q), resulting in the hypermodified nucleoside queuosine (7-(((4,5-cis-dihydroxy-2-cyclopenten-1-yl)amino)methyl)-7-deazaguanosine). The protein is Queuine tRNA-ribosyltransferase of Vibrio vulnificus (strain CMCP6).